The sequence spans 192 residues: Urease accessory protein UreE (192 aa).

A disordered region spans residues 170–192; the sequence is EHHGHSHSHSHDHVHDEKCGHKH. Basic and acidic residues predominate over residues 178 to 192; sequence HSHDHVHDEKCGHKH.

The protein belongs to the UreE family.

It is found in the cytoplasm. Involved in urease metallocenter assembly. Binds nickel. Probably functions as a nickel donor during metallocenter assembly. In Cupriavidus necator (strain ATCC 17699 / DSM 428 / KCTC 22496 / NCIMB 10442 / H16 / Stanier 337) (Ralstonia eutropha), this protein is Urease accessory protein UreE.